We begin with the raw amino-acid sequence, 741 residues long: MDAGSKKEDFLLLEDEKFDFDLSLSSSSTNEDDEVFFGPVGHKERCIAASLDLNRRVPGQPLAPGSGSPCTLSPLTGEKFVEVYKEAHLLALQIESHSRREVAQAATPQNPVNQGKETFVQDSQLKVSLFEKEQKRDRSPMSLKRETFCLPSSRVQPPMGEPQLLASPGLLSSPVSAGPAQTQSNQGLPCSSQPLPRESSTSQPPSQAGPQKRITSKLQPPRALPVRGRNLHLATEKLKKEVPASIQRTKLVNEKGSQSDVLQDKPSTAPDAASREGHPGKRSLPIPGKLGLKKTLLKPPGYTGNLTRKSSTSGSASSLESGVYRSSVAGKAKSSEQRSSIPASGSQRRTSTSKSGRIGPAASRQALPAAPARVFGRQANKADAAQTVAEQPKVPTLSPLTQQPQTPEQRGPRLDPDTETPQLNKTVSIKRRDSYLSCKTEAVSTTTNPFKVPQFSVGESPGGVTPKFSRTHRLQSWTPASRVVSSTPVRRSSGTTPQGLPGSMRTPLSTRRMSVLPTPASRRLSSLPLMAPQSMPRALVSPLCVPARRLSSEPRRRSTVRAELTQESSGSGSGGQAQGLSSDESSSPPSSVPQALNFSPEKSASPPPQGSSTGAAQGEAEPPEDTLPSEVHGGGCSHTPSEGLLLDLKLDQLTITPEAGGRDLADCPLIDFSNTPESNTALGPSSWPLIDLIMNTPDMGRNDVGKPAKAELGQLIDLGSPLIQLSPEADKENVDSPLLKF.

The residue at position 73 (Ser-73) is a Phosphoserine. Disordered regions lie at residues 101-120 (EVAQ…ETFV), 131-428 (EKEQ…KTVS), and 450-512 (FKVP…STRR). The segment covering 106–120 (ATPQNPVNQGKETFV) has biased composition (polar residues). The segment covering 131–147 (EKEQKRDRSPMSLKRET) has biased composition (basic and acidic residues). Residues Ser-139, Ser-153, Ser-191, and Ser-245 each carry the phosphoserine modification. Residues 173–209 (SPVSAGPAQTQSNQGLPCSSQPLPRESSTSQPPSQAG) show a composition bias toward polar residues. The span at 246–261 (IQRTKLVNEKGSQSDV) shows a compositional bias: polar residues. Low complexity predominate over residues 310 to 321 (SSTSGSASSLES). Ser-311 bears the Phosphoserine mark. A compositionally biased stretch (polar residues) spans 337 to 355 (QRSSIPASGSQRRTSTSKS). Over residues 360-372 (PAASRQALPAAPA) the composition is skewed to low complexity. Polar residues predominate over residues 398–408 (SPLTQQPQTPE). Ser-460 carries the post-translational modification Phosphoserine. Phosphothreonine is present on Thr-465. Phosphoserine is present on residues Ser-476, Ser-493, Ser-509, and Ser-514. The segment covering 478–497 (TPASRVVSSTPVRRSSGTTP) has biased composition (low complexity). Thr-518 bears the Phosphothreonine mark. Phosphoserine is present on residues Ser-521, Ser-541, Ser-582, and Ser-599. The disordered stretch occupies residues 550-640 (LSSEPRRRST…VHGGGCSHTP (91 aa)). Residues 578-593 (QGLSSDESSSPPSSVP) are compositionally biased toward low complexity. Thr-696 carries the phosphothreonine modification. Phosphoserine is present on residues Ser-720, Ser-726, and Ser-736.

Phosphorylated in mitosis.

The protein resides in the cytoplasm. It is found in the cytoskeleton. In terms of biological role, may be involved in p53-induced cell cycle arrest in G2/M phase by interfering with microtubule rearrangements that are required to enter mitosis. Overexpression delays G2/M phase progression. The polypeptide is G2 and S phase-expressed protein 1 (Gtse1) (Mus musculus (Mouse)).